The sequence spans 502 residues: Histidine--tRNA ligase (502 aa).

It belongs to the class-II aminoacyl-tRNA synthetase family. In terms of assembly, homodimer.

It localises to the cytoplasm. It catalyses the reaction tRNA(His) + L-histidine + ATP = L-histidyl-tRNA(His) + AMP + diphosphate + H(+). The protein is Histidine--tRNA ligase of Brucella suis (strain ATCC 23445 / NCTC 10510).